Consider the following 115-residue polypeptide: NADH-ubiquinone oxidoreductase chain 3 (115 aa).

Helical transmembrane passes span 4–24, 55–75, and 86–106; these read LMALMVNITLSILLITVAFWL, FFLVAITFLLYDLEIALLLPL, and TMMLTAFILVSVLALGLAYEW.

This sequence belongs to the complex I subunit 3 family. Core subunit of respiratory chain NADH dehydrogenase (Complex I) which is composed of 45 different subunits. Interacts with TMEM186. Interacts with TMEM242.

Its subcellular location is the mitochondrion inner membrane. It catalyses the reaction a ubiquinone + NADH + 5 H(+)(in) = a ubiquinol + NAD(+) + 4 H(+)(out). Its function is as follows. Core subunit of the mitochondrial membrane respiratory chain NADH dehydrogenase (Complex I) which catalyzes electron transfer from NADH through the respiratory chain, using ubiquinone as an electron acceptor. Essential for the catalytic activity of complex I. In Peromyscus gossypinus (Cotton deermouse), this protein is NADH-ubiquinone oxidoreductase chain 3.